The chain runs to 507 residues: Transcription factor SOX-9 (507 aa).

2 disordered regions span residues 1 to 67 and 160 to 250; these read MNLL…SEED and RLRV…AGKV. The segment covering 30–41 has biased composition (low complexity); the sequence is SAGSPCPSGSGS. Residues 42 to 52 are compositionally biased toward polar residues; sequence DTENTRPQENT. 2 stretches are compositionally biased toward basic and acidic residues: residues 56-67 and 160-174; these read GEPDLKKESEED and RLRVQHKKDHPDYKY. The interval 63–103 is dimerization (DIM); it reads ESEEDKFPVCIREAVSQVLKGYDWTLVPMPVRVNGSSKNKP. Residues 63–103 are PQA; that stretch reads ESEEDKFPVCIREAVSQVLKGYDWTLVPMPVRVNGSSKNKP. Serine 64 carries the post-translational modification Phosphoserine. The HMG box DNA-binding region spans 105–173; sequence VKRPMNAFMV…QHKKDHPDYK (69 aa). At serine 211 the chain carries Phosphoserine. Residues 224-307 form a transactivation domain (TAM) region; it reads PGEHSGQSQG…LPPNGHPGVP (84 aa). Short sequence motifs (9aaTAD) lie at residues 275–284 and 290–298; these read IGELSSDVIS and DVNEFDQYL. Residues 335-429 form a disordered region; sequence WMSKQQAPPP…PFNLPHYNPS (95 aa). Over residues 341–369 the composition is skewed to pro residues; the sequence is APPPPPQQPPQAPQAPQAPPQQQAPPQPQ. The segment covering 378-420 has biased composition (polar residues); sequence HTLTTLSSEPGQSQRTHIKTEQLSPSHYSEQQQHSPQQISYSP. Positions 392–507 are transactivation domain (TAC); the sequence is RTHIKTEQLS…QPVYTQLTRP (116 aa). A Glycyl lysine isopeptide (Lys-Gly) (interchain with G-Cter in ubiquitin) cross-link involves residue lysine 396. Residues 458–466 carry the 9aaTAD 3 motif; the sequence is SGLYSTFTY. The tract at residues 477–507 is disordered; it reads PIADTSGVPSIPQTHSPQHWEQPVYTQLTRP. Over residues 483-507 the composition is skewed to polar residues; that stretch reads GVPSIPQTHSPQHWEQPVYTQLTRP.

In terms of assembly, homodimer; homodimerization is required for activity. Interacts (via C-terminus) with ZNF219; forming a complex that binds to the COL2A1 promoter and activates COL2A1 expression. Interacts with DDRGK1. Interacts with EP300/p300. Interacts with beta-catenin (CTNNB1); inhibiting CTNNB1 activity by competing with the binding sites of TCF/LEF within CTNNB1. Post-translationally, acetylated; acetylation impairs nuclear localization and ability to transactivate expression of target genes. Deacetylated by SIRT1. Phosphorylation at Ser-64 and Ser-211 by PKA increases transcriptional activity and may help delay chondrocyte maturation downstream of PTHLH/PTHrP signaling. Phosphorylation at either Ser-64 or Ser-211 is required for sumoylation, but phosphorylation is not dependent on sumoylation. Phosphorylated on tyrosine residues; tyrosine dephosphorylation by PTPN11/SHP2 blocks SOX9 phosphorylation by PKA and subsequent SUMOylation. In terms of processing, sumoylated; phosphorylation at either Ser-64 or Ser-211 is required for sumoylation. Sumoylation is induced by BMP signaling pathway. Post-translationally, ubiquitinated; ubiquitination leads to proteasomal degradation and is negatively regulated by DDRGK1.

It localises to the nucleus. Functionally, transcription factor that plays a key role in chondrocytes differentiation and skeletal development. Specifically binds the 5'-ACAAAG-3' DNA motif present in enhancers and super-enhancers and promotes expression of genes important for chondrogenesis, including cartilage matrix protein-coding genes COL2A1, COL4A2, COL9A1, COL11A2 and ACAN, SOX5 and SOX6. Also binds to some promoter regions. Plays a central role in successive steps of chondrocyte differentiation. Absolutely required for precartilaginous condensation, the first step in chondrogenesis during which skeletal progenitors differentiate into prechondrocytes. Together with SOX5 and SOX6, required for overt chondrogenesis when condensed prechondrocytes differentiate into early stage chondrocytes, the second step in chondrogenesis. Later, required to direct hypertrophic maturation and block osteoblast differentiation of growth plate chondrocytes: maintains chondrocyte columnar proliferation, delays prehypertrophy and then prevents osteoblastic differentiation of chondrocytes by lowering beta-catenin (CTNNB1) signaling and RUNX2 expression. Also required for chondrocyte hypertrophy, both indirectly, by keeping the lineage fate of chondrocytes, and directly, by remaining present in upper hypertrophic cells and transactivating COL10A1 along with MEF2C. Low lipid levels are the main nutritional determinant for chondrogenic commitment of skeletal progenitor cells: when lipids levels are low, FOXO (FOXO1 and FOXO3) transcription factors promote expression of SOX9, which induces chondrogenic commitment and suppresses fatty acid oxidation. Mechanistically, helps, but is not required, to remove epigenetic signatures of transcriptional repression and deposit active promoter and enhancer marks at chondrocyte-specific genes. Acts in cooperation with the Hedgehog pathway-dependent GLI (GLI1 and GLI3) transcription factors. In addition to cartilage development, also acts as a regulator of proliferation and differentiation in epithelial stem/progenitor cells: involved in the lung epithelium during branching morphogenesis, by balancing proliferation and differentiation and regulating the extracellular matrix. Controls epithelial branching during kidney development. The sequence is that of Transcription factor SOX-9 from Rattus norvegicus (Rat).